The sequence spans 1791 residues: 1-phosphatidylinositol-3-phosphate 5-kinase FAB1B (1791 aa).

The segment at 39–105 (DQSCRVCYEC…VCNYCFRQWE (67 aa)) adopts an FYVE-type zinc-finger fold. Positions 45, 48, 61, 64, 69, 72, 97, and 100 each coordinate Zn(2+). Disordered stretches follow at residues 166–186 (HGVSSMETSVTKQGKETSRRS), 279–370 (EQFQ…DRTT), 770–790 (SDLSGRSVPVDTPADKSNPIV), and 834–859 (QQNNEKPKETQSQKEEFPPSPSDHQS). Residues 279–293 (EQFQKKSEHDGRDEC) are compositionally biased toward basic and acidic residues. The segment covering 324–345 (PENEEDERESALFDEEDNEGDA) has biased composition (acidic residues). Residues 838 to 850 (EKPKETQSQKEEF) show a composition bias toward basic and acidic residues. The stretch at 1077 to 1111 (EKGFRRRIGELEEVLQKEKAEFEENMQKILHREVN) forms a coiled coil. Over residues 1151–1164 (NSDDTKREENEKPP) the composition is skewed to basic and acidic residues. The disordered stretch occupies residues 1151 to 1242 (NSDDTKREEN…DTSYPLENKV (92 aa)). 2 stretches are compositionally biased toward polar residues: residues 1167–1188 (KSQTLPEMNAGTNSLLTGSEVN) and 1196–1206 (TGDTGSLNNVQ). The PIPK domain occupies 1433-1758 (SELNIPRPVD…RFRKAMTTYF (326 aa)). The disordered stretch occupies residues 1769–1791 (NVVANNSKSDQPEETSQAGTQAE). The segment covering 1771–1791 (VANNSKSDQPEETSQAGTQAE) has biased composition (polar residues).

Component of the PI(3,5)P2 regulatory complex at least composed of ATG18, SAC/FIG4, FAB1 and VAC14. Mg(2+) serves as cofactor. The cofactor is Mn(2+). In terms of tissue distribution, ubiquitous with highest expression levels in the root hair zone, pollen, and stamens.

The protein resides in the endosome membrane. The catalysed reaction is a 1,2-diacyl-sn-glycero-3-phospho-(1D-myo-inositol-3-phosphate) + ATP = a 1,2-diacyl-sn-glycero-3-phospho-(1D-myo-inositol-3,5-bisphosphate) + ADP + H(+). Its function is as follows. The PI(3,5)P2 regulatory complex regulates both the synthesis and turnover of phosphatidylinositol 3,5-bisphosphate (PtdIns(3,5)P2). Catalyzes the phosphorylation of phosphatidylinositol 3-phosphate on the fifth hydroxyl of the myo-inositol ring, to form phosphatidylinositol 3,5-bisphosphate. Plays an important role in maintenance of endomembrane homeostasis including endocytosis, vacuole formation, and vacuolar acidification processes. Required for development of viable pollen. Might mediate recycling of auxin transporters. The polypeptide is 1-phosphatidylinositol-3-phosphate 5-kinase FAB1B (FAB1B) (Arabidopsis thaliana (Mouse-ear cress)).